A 629-amino-acid chain; its full sequence is tRNA uridine 5-carboxymethylaminomethyl modification enzyme MnmG (629 aa).

FAD-binding positions include 13–18 (GGGHAG), valine 125, and serine 180. 273-287 (GPRYCPSIEDKVMRF) serves as a coordination point for NAD(+). An FAD-binding site is contributed by glutamine 370.

Belongs to the MnmG family. As to quaternary structure, homodimer. Heterotetramer of two MnmE and two MnmG subunits. Requires FAD as cofactor.

The protein localises to the cytoplasm. Functionally, NAD-binding protein involved in the addition of a carboxymethylaminomethyl (cmnm) group at the wobble position (U34) of certain tRNAs, forming tRNA-cmnm(5)s(2)U34. The sequence is that of tRNA uridine 5-carboxymethylaminomethyl modification enzyme MnmG from Salmonella dublin (strain CT_02021853).